We begin with the raw amino-acid sequence, 569 residues long: Urease subunit alpha (569 aa).

One can recognise a Urease domain in the interval 131 to 569; the sequence is GGFDSHIHFI…LPMAQRYFLF (439 aa). The Ni(2+) site is built by H136, H138, and K219. The residue at position 219 (K219) is an N6-carboxylysine. H221 contacts substrate. The Ni(2+) site is built by H248 and H274. H322 acts as the Proton donor in catalysis. D362 contributes to the Ni(2+) binding site.

The protein belongs to the metallo-dependent hydrolases superfamily. Urease alpha subunit family. As to quaternary structure, heterotrimer of UreA (gamma), UreB (beta) and UreC (alpha) subunits. Three heterotrimers associate to form the active enzyme. The cofactor is Ni cation. Post-translationally, carboxylation allows a single lysine to coordinate two nickel ions.

Its subcellular location is the cytoplasm. It carries out the reaction urea + 2 H2O + H(+) = hydrogencarbonate + 2 NH4(+). Its pathway is nitrogen metabolism; urea degradation; CO(2) and NH(3) from urea (urease route): step 1/1. In Ruegeria pomeroyi (strain ATCC 700808 / DSM 15171 / DSS-3) (Silicibacter pomeroyi), this protein is Urease subunit alpha.